We begin with the raw amino-acid sequence, 293 residues long: uncharacterized protein (293 aa).

Residues 55-77 form a helical membrane-spanning segment; that stretch reads IVLAKEIFAVAFFSLGMSCLLMA.

The protein localises to the membrane. This is an uncharacterized protein from Caenorhabditis elegans.